Reading from the N-terminus, the 374-residue chain is DNA integrity scanning protein DisA (374 aa).

In terms of domain architecture, DAC spans 20-158 (EALMRASLSA…DGERRVLEES (139 aa)). ATP-binding positions include Gly-87, Leu-105, and 118 to 122 (TRHRT).

It belongs to the DisA family. Homooctamer. Mg(2+) is required as a cofactor.

The enzyme catalyses 2 ATP = 3',3'-c-di-AMP + 2 diphosphate. Functionally, participates in a DNA-damage check-point that is active prior to asymmetric division when DNA is damaged. DisA forms globular foci that rapidly scan along the chromosomes during sporulation, searching for lesions. When a lesion is present, DisA pauses at the lesion site. This triggers a cellular response that culminates in a temporary block in sporulation initiation. Also has diadenylate cyclase activity, catalyzing the condensation of 2 ATP molecules into cyclic di-AMP (c-di-AMP). c-di-AMP acts as a signaling molecule that couples DNA integrity with progression of sporulation. The rise in c-di-AMP level generated by DisA while scanning the chromosome, operates as a positive signal that advances sporulation; upon encountering a lesion, the DisA focus arrests at the damaged site and halts c-di-AMP synthesis. This chain is DNA integrity scanning protein DisA, found in Streptomyces griseus subsp. griseus (strain JCM 4626 / CBS 651.72 / NBRC 13350 / KCC S-0626 / ISP 5235).